The chain runs to 211 residues: Claudin-13 (211 aa).

Over 1 to 8 (MVVSKQEA) the chain is Cytoplasmic. A helical membrane pass occupies residues 9–29 (ISFSVTSLGWVGAIVSCVLPV). Over 30–80 (WRVTFPDDETDPDATIWEGLWHICQVRENRWIQCTLYDTRILVAQDIKVSR) the chain is Extracellular. The chain crosses the membrane as a helical span at residues 81-101 (VFMVICTIGTWLGLLLCVLGD). Topologically, residues 102–118 (WRINCFMNFTIEENLLK) are cytoplasmic. A helical membrane pass occupies residues 119–139 (VAGGMFLSVGLLMLVPLSWVT). Over 140–165 (HNIIHGFFNPLLGFSKKVQMGSSLSL) the chain is Extracellular. Residues 166-186 (AWTSSLLLLLGGILLCVNIPV) traverse the membrane as a helical segment. At 187–211 (CRDFPRCIETPSARPSGANNDTLDV) the chain is on the cytoplasmic side.

It belongs to the claudin family.

It is found in the cell junction. The protein localises to the tight junction. It localises to the cell membrane. Its function is as follows. Plays a major role in tight junction-specific obliteration of the intercellular space, through calcium-independent cell-adhesion activity. The chain is Claudin-13 (Cldn13) from Mus musculus (Mouse).